Here is a 597-residue protein sequence, read N- to C-terminus: Formate--tetrahydrofolate ligase (597 aa).

Residue 84–91 (TPLGEGKS) participates in ATP binding.

This sequence belongs to the formate--tetrahydrofolate ligase family.

It catalyses the reaction (6S)-5,6,7,8-tetrahydrofolate + formate + ATP = (6R)-10-formyltetrahydrofolate + ADP + phosphate. Its pathway is one-carbon metabolism; tetrahydrofolate interconversion. The polypeptide is Formate--tetrahydrofolate ligase (Dehalococcoides mccartyi (strain CBDB1)).